We begin with the raw amino-acid sequence, 448 residues long: Chromogranin-A (448 aa).

An N-terminal signal peptide occupies residues 1–18 (MRSAVVLALLLCAGQVIA). Cys35 and Cys56 are joined by a disulfide. The tract at residues 116 to 251 (LKEVTEEALS…AFNPHPSLSY (136 aa)) is disordered. Basic and acidic residues-rich tracts occupy residues 129–139 (AEARGDSKEVE) and 158–175 (QESR…KEAI). Residue Ser197 is modified to Phosphoserine. Over residues 205 to 222 (VDREKGLGAERGQQAKRE) the composition is skewed to basic and acidic residues. A compositionally biased stretch (acidic residues) spans 223 to 238 (EEEDEAGEKADAEEEG). Phosphoserine occurs at positions 258 and 288. Residues 263 to 429 (LVVDGARKTG…PEDQELESLS (167 aa)) are disordered. Gly308 is subject to Glycine amide. Basic and acidic residues predominate over residues 310 to 350 (KSRELEQEKEQERLSKEWEDAKRWSKMDQLAKELTAEKRLE). Phosphoserine occurs at positions 311, 324, and 362. Methionine sulfoxide is present on Met363. 4 positions are modified to phosphoserine: Ser389, Ser393, Ser415, and Ser429. Residues 405–422 (YPEEKKEEEGSANRRPED) show a composition bias toward basic and acidic residues. O-linked (Xyl...) (chondroitin sulfate) serine glycosylation occurs at Ser415.

The protein belongs to the chromogranin/secretogranin protein family. In terms of assembly, self-interacts; self-assembly is promoted in vitro by chondroitin sulfate attachment which occurs at mildly acidic pH conditions. Interacts with SCG3. Interacts with ITPR1 in the secretory granules. Post-translationally, O-glycosylated; contains chondroitin sulfate (CS). CS attachment is pH-dependent, being observed at mildly acidic conditions of pH 5 but not at neutral pH, and promotes self-assembly in vitro. Highly expressed in adrenal medulla and pituitary gland. Weaker expression detected in cerebrum, cerebellum, spinal cord, liver, thyroid gland, striated muscle, lung, spleen, kidney, parotid gland, and sublingual gland.

The protein localises to the secreted. It is found in the cytoplasmic vesicle. The protein resides in the secretory vesicle. Its subcellular location is the neuronal dense core vesicle. Its function is as follows. Strongly inhibits glucose induced insulin release from the pancreas. In terms of biological role, inhibits catecholamine release from chromaffin cells and noradrenergic neurons by acting as a non-competitive nicotinic cholinergic antagonist. Can induce mast cell migration, degranulation and production of cytokines and chemokines. Regulates granule biogenesis in endocrine cells by up-regulating the transcription of protease nexin 1 (SERPINE2) via a cAMP-PKA-SP1 pathway. This leads to inhibition of granule protein degradation in the Golgi complex which in turn promotes granule formation. The chain is Chromogranin-A (CHGA) from Equus caballus (Horse).